A 719-amino-acid chain; its full sequence is Pesticidal crystal protein Cry1Ia (719 aa).

This sequence belongs to the delta endotoxin family.

Functionally, promotes colloidosmotic lysis by binding to the midgut epithelial cells of certain coleopteran and lepidopteran species. Active on Plutella xylostella and Bombyx mori. This chain is Pesticidal crystal protein Cry1Ia (cry1Ia), found in Bacillus thuringiensis subsp. kurstaki.